The sequence spans 504 residues: ATP synthase subunit alpha (504 aa).

An ATP-binding site is contributed by 171–178 (GDRQTGKT).

It belongs to the ATPase alpha/beta chains family. F-type ATPases have 2 components, CF(1) - the catalytic core - and CF(0) - the membrane proton channel. CF(1) has five subunits: alpha(3), beta(3), gamma(1), delta(1), epsilon(1). CF(0) has three main subunits: a(1), b(2) and c(9-12). The alpha and beta chains form an alternating ring which encloses part of the gamma chain. CF(1) is attached to CF(0) by a central stalk formed by the gamma and epsilon chains, while a peripheral stalk is formed by the delta and b chains.

Its subcellular location is the cell inner membrane. It carries out the reaction ATP + H2O + 4 H(+)(in) = ADP + phosphate + 5 H(+)(out). In terms of biological role, produces ATP from ADP in the presence of a proton gradient across the membrane. The alpha chain is a regulatory subunit. This chain is ATP synthase subunit alpha, found in Helicobacter hepaticus (strain ATCC 51449 / 3B1).